Reading from the N-terminus, the 616-residue chain is Chaperone protein HscA homolog (616 aa).

The protein belongs to the heat shock protein 70 family.

Functionally, chaperone involved in the maturation of iron-sulfur cluster-containing proteins. Has a low intrinsic ATPase activity which is markedly stimulated by HscB. In Tolumonas auensis (strain DSM 9187 / NBRC 110442 / TA 4), this protein is Chaperone protein HscA homolog.